A 265-amino-acid polypeptide reads, in one-letter code: Apolipoprotein A-I (265 aa).

A signal peptide spans 1–18 (MKAVVLTLAVLFLTGSQA). 2 tandem repeats follow at residues 67 to 88 (LKLV…EHLG) and 89 to 110 (PVAQ…REIN). Positions 67 to 265 (LKLVDNWDTL…IDEAAKKLTA (199 aa)) are 10 X approximate tandem repeats. Residues 111–121 (KDLEDVRQKTQ) form a 3; half-length repeat. Tandem repeats lie at residues 122 to 143 (PFLD…QKVE), 144 to 165 (PLSA…EQVT), 166 to 187 (PLGE…TQLA), 188 to 209 (PYSE…EGGS), and 210 to 231 (ASLA…EKAK). Methionine sulfoxide is present on Met193. One copy of the 9; half-length repeat lies at 232 to 242 (PVLEDIHQGLM). Methionine sulfoxide is present on residues Met242 and Met244. Repeat unit 10 spans residues 243-265 (PMWESFKTGVLNVIDEAAKKLTA).

The protein belongs to the apolipoprotein A1/A4/E family. Homodimer. Interacts with APOA1BP and CLU. Component of a sperm activating protein complex (SPAP), consisting of APOA1, an immunoglobulin heavy chain, an immunoglobulin light chain and albumin. Interacts with NDRG1. Interacts with SCGB3A2. Interacts with NAXE and YJEFN3. Post-translationally, glycosylated. Palmitoylated. In terms of processing, phosphorylation sites are present in the extracellular medium. As to expression, major protein of plasma HDL, also found in chylomicrons.

Its subcellular location is the secreted. Participates in the reverse transport of cholesterol from tissues to the liver for excretion by promoting cholesterol efflux from tissues and by acting as a cofactor for the lecithin cholesterol acyltransferase (LCAT). As part of the SPAP complex, activates spermatozoa motility. In Tupaia belangeri (Common tree shrew), this protein is Apolipoprotein A-I (APOA1).